Here is a 488-residue protein sequence, read N- to C-terminus: Fumarate hydratase (488 aa).

5 residues coordinate (S)-malate: Ser-105, Ser-147, Asn-148, Thr-194, and His-195. The active-site Proton donor/acceptor is the His-195. Ser-340 is an active-site residue. Ser-341, Lys-346, and Asn-348 together coordinate (S)-malate.

Belongs to the class-II fumarase/aspartase family. Fumarase subfamily. In terms of assembly, homotetramer.

Its subcellular location is the cytoplasm. It is found in the cytosol. It catalyses the reaction (S)-malate = fumarate + H2O. In terms of biological role, catalyzes the reversible stereospecific interconversion of fumarate to L-malate. Fumarate metabolism in the cytosol plays a role during urea cycle and arginine metabolism; fumarate being a by-product of the urea cycle and amino-acid catabolism. This chain is Fumarate hydratase, found in Schistosoma mansoni (Blood fluke).